Consider the following 81-residue polypeptide: Cytochrome b559 subunit alpha (81 aa).

The chain crosses the membrane as a helical span at residues 21-35 (VIHSITIPALFIAGW). His23 lines the heme pocket.

The protein belongs to the PsbE/PsbF family. In terms of assembly, heterodimer of an alpha subunit and a beta subunit. PSII is composed of 1 copy each of membrane proteins PsbA, PsbB, PsbC, PsbD, PsbE, PsbF, PsbH, PsbI, PsbJ, PsbK, PsbL, PsbM, PsbT, PsbX, PsbY, PsbZ, Psb30/Ycf12, at least 3 peripheral proteins of the oxygen-evolving complex and a large number of cofactors. It forms dimeric complexes. The cofactor is heme b.

Its subcellular location is the plastid. The protein resides in the chloroplast thylakoid membrane. This b-type cytochrome is tightly associated with the reaction center of photosystem II (PSII). PSII is a light-driven water:plastoquinone oxidoreductase that uses light energy to abstract electrons from H(2)O, generating O(2) and a proton gradient subsequently used for ATP formation. It consists of a core antenna complex that captures photons, and an electron transfer chain that converts photonic excitation into a charge separation. The protein is Cytochrome b559 subunit alpha of Tetradesmus obliquus (Green alga).